A 676-amino-acid polypeptide reads, in one-letter code: Envelope glycoprotein (676 aa).

The signal sequence occupies residues methionine 1–serine 32. Over methionine 33 to glutamine 650 the chain is Extracellular. Asparagine 40 carries N-linked (GlcNAc...) asparagine; by host glycosylation. Disulfide bonds link cysteine 53–cysteine 609, cysteine 108–cysteine 135, cysteine 121–cysteine 147, cysteine 511–cysteine 556, and cysteine 601–cysteine 608. The segment at lysine 54–glutamate 201 is receptor-binding. 7 N-linked (GlcNAc...) asparagine; by host glycosylation sites follow: asparagine 204, asparagine 208, asparagine 238, asparagine 257, asparagine 268, asparagine 296, and asparagine 314. Residues glutamate 305–threonine 485 form a mucin-like region region. Residues leucine 313–valine 351 form a disordered region. A compositionally biased stretch (basic and acidic residues) spans arginine 330–proline 344. Residue asparagine 366 is glycosylated (N-linked (GlcNAc...) asparagine; by host). A disordered region spans residues serine 406–leucine 458. Composition is skewed to polar residues over residues proline 415–threonine 430 and threonine 438–leucine 458. A glycan (N-linked (GlcNAc...) asparagine; by host) is linked at asparagine 463. Residues histidine 524–alanine 539 are fusion peptide. The stretch at leucine 554–arginine 595 forms a coiled coil. Asparagine 563 carries an N-linked (GlcNAc...) asparagine; by host glycan. The stretch at tryptophan 615 to proline 634 forms a coiled coil. Asparagine 618 carries an N-linked (GlcNAc...) asparagine; by host glycan. Residues tryptophan 651 to valine 671 form a helical membrane-spanning segment. 2 S-palmitoyl cysteine; by host lipidation sites follow: cysteine 670 and cysteine 672. At cysteine 672–cysteine 676 the chain is on the cytoplasmic side.

Belongs to the filoviruses glycoprotein family. As to quaternary structure, homotrimer; each monomer consists of a GP1 and a GP2 subunit linked by disulfide bonds. The resulting peplomers (GP1,2) protrude from the virus surface as spikes. Interacts with host integrin alpha-V/ITGAV. Interacts with host CLEC10A. Binds also to host CD209 and CLEC4M/DC-SIGN(R). Interacts with host FOLR1. Interacts with BST2; this interaction inhibits the antiviral effect of BST2 and this allows viral release from infected cells. Interacts with host FCN1; this interaction enhances viral entry. Interacts with host TLR4; this interaction induces cell death in T-lymphocytes or proinflammatory cytokines and SOCS1 production in monocytes. Interacts with host entry receptor NPC1. In terms of assembly, GP1 and GP2delta are part of GP1,2delta soluble complexes released by ectodomain shedding. Post-translationally, the signal peptide region modulates GP's high mannose glycosylation, thereby determining the efficiency of the interactions with DC-SIGN(R). N-glycosylated. In terms of processing, O-glycosylated in the mucin-like region. Post-translationally, palmitoylation of GP2 is not required for its function. Specific enzymatic cleavages in vivo yield mature proteins. The precursor is processed into GP1 and GP2 by host cell furin in the trans Golgi, and maybe by other host proteases, to yield the mature GP1 and GP2 proteins. The cleavage site corresponds to the furin optimal cleavage sequence [KR]-X-[KR]-R. This cleavage does not seem to be required for function. After the internalization of the virus into cell endosomes, GP1 C-terminus is removed by the endosomal proteases cathepsin B, cathepsin L, or both, leaving a 19-kDa N-terminal fragment which is further digested by cathepsin B. Proteolytic processing of GP1,2 by host ADAM17 can remove the transmembrane anchor of GP2 and leads to shedding of complexes consisting in GP1 and truncated GP2 (GP1,2delta).

The protein localises to the virion membrane. It is found in the host cell membrane. It localises to the secreted. In terms of biological role, trimeric GP1,2 complexes form the virion surface spikes and mediate the viral entry processes, with GP1 acting as the receptor-binding subunit and GP2 as the membrane fusion subunit. At later times of infection, down-regulates the expression of various host cell surface molecules that are essential for immune surveillance and cell adhesion. Down-modulates several integrins including ITGA1, ITGA2, ITGA3, ITGA4, ITGA5, ITGA6, ITGAV and ITGB1. This decrease in cell adhesion molecules may lead to cell detachment, contributing to the disruption of blood vessel integrity and hemorrhages developed during infection (cytotoxicity). Interacts with host TLR4 and thereby stimulates the differentiation and activation of monocytes leading to bystander death of T-lymphocytes. Down-regulates as well the function of host natural killer cells. Counteracts the antiviral effect of host BST2/tetherin that restricts release of progeny virions from infected cells. However, cooperates with VP40 and host BST2 to activate canonical NF-kappa-B pathway in a manner dependent on neddylation. Functions as a decoy for anti-GP1,2 antibodies thereby contributing to viral immune evasion. Interacts and activates host macrophages and dendritic cells inducing up-regulation of cytokine transcription. This effect is mediated throught activation of host TLR4. Functionally, responsible for binding to the receptor(s) on target cells. Interacts with CD209/DC-SIGN and CLEC4M/DC-SIGNR which act as cofactors for virus entry into dendritic cells (DCs) and endothelial cells. Binding to the macrophage specific lectin CLEC10A also seem to enhance virus infectivity. Interaction with FOLR1/folate receptor alpha may be a cofactor for virus entry in some cell types, although results are contradictory. Members of the Tyro3 receptor tyrosine kinase family also seem to be cell entry factors in filovirus infection. Once attached, the virions are internalized through clathrin-dependent endocytosis and/or macropinocytosis. After internalization of the virus into the endosomes of the host cell, proteolysis of GP1 by two cysteine proteases, CTSB/cathepsin B and CTSL/cathepsin L removes the glycan cap and allows GP1 binding to the host entry receptor NPC1. NPC1-binding, Ca(2+) and acidic pH induce a conformational change of GP2, which unmasks its fusion peptide and permit membranes fusion. Its function is as follows. Acts as a class I viral fusion protein. Under the current model, the protein has at least 3 conformational states: pre-fusion native state, pre-hairpin intermediate state, and post-fusion hairpin state. During viral and target cell membrane fusion, the coiled coil regions (heptad repeats) assume a trimer-of-hairpins structure, positioning the fusion peptide in close proximity to the C-terminal region of the ectodomain. The formation of this structure appears to drive apposition and subsequent fusion of viral and target cell membranes. Responsible for penetration of the virus into the cell cytoplasm by mediating the fusion of the membrane of the endocytosed virus particle with the endosomal membrane. Low pH in endosomes induces an irreversible conformational change in GP2, releasing the fusion hydrophobic peptide. This chain is Envelope glycoprotein (GP), found in Epomops franqueti (Franquet's epauletted fruit bat).